Here is a 1390-residue protein sequence, read N- to C-terminus: DNA-directed RNA polymerase subunit beta'' (1390 aa).

Positions 220, 291, 298, and 301 each coordinate Zn(2+).

This sequence belongs to the RNA polymerase beta' chain family. RpoC2 subfamily. In plastids the minimal PEP RNA polymerase catalytic core is composed of four subunits: alpha, beta, beta', and beta''. When a (nuclear-encoded) sigma factor is associated with the core the holoenzyme is formed, which can initiate transcription. Requires Zn(2+) as cofactor.

The protein resides in the plastid. Its subcellular location is the chloroplast. It carries out the reaction RNA(n) + a ribonucleoside 5'-triphosphate = RNA(n+1) + diphosphate. In terms of biological role, DNA-dependent RNA polymerase catalyzes the transcription of DNA into RNA using the four ribonucleoside triphosphates as substrates. In Populus alba (White poplar), this protein is DNA-directed RNA polymerase subunit beta''.